The chain runs to 197 residues: Thymidine kinase (197 aa).

Residues 9 to 16 and 83 to 86 each bind ATP; these read AAMNAGKS and DESQ. The active-site Proton acceptor is the E84. 4 residues coordinate Zn(2+): C141, C143, C178, and C181.

This sequence belongs to the thymidine kinase family. As to quaternary structure, homotetramer.

The protein resides in the cytoplasm. The enzyme catalyses thymidine + ATP = dTMP + ADP + H(+). This Albidiferax ferrireducens (strain ATCC BAA-621 / DSM 15236 / T118) (Rhodoferax ferrireducens) protein is Thymidine kinase.